Reading from the N-terminus, the 183-residue chain is Microfibrillar-associated protein 2 (183 aa).

The or 18 signal peptide spans 1–16 (MRAACLFLLFMPGLLA). Residue glutamine 17 is modified to Pyrrolidone carboxylic acid. Sulfotyrosine occurs at positions 46, 47, and 49. The segment at 52-92 (VSPRTPEEQFQSQQQVQQEVIPAPTPEPAAAGDLETEPTEP) is disordered. The segment covering 59 to 70 (EQFQSQQQVQQE) has biased composition (low complexity). The 31-residue stretch at 153–183 (CRDKFSKCGVMAVSGLCQSVAASCARSCGGC) folds into the ShKT domain. Disulfide bonds link cysteine 153-cysteine 183, cysteine 160-cysteine 176, and cysteine 169-cysteine 180.

It belongs to the MFAP family. As to quaternary structure, forms a ternary complex with BGN and ELN. Interacts with FBN1 (via N-terminal domain) and FBN2. Post-translationally, forms intermolecular disulfide bonds either with other MAGP-1 molecules or with other components of the microfibrils. May form transglutaminase cross-links. O-glycosylated.

It localises to the secreted. The protein resides in the extracellular space. It is found in the extracellular matrix. Component of the elastin-associated microfibrils. The chain is Microfibrillar-associated protein 2 (Mfap2) from Mus musculus (Mouse).